We begin with the raw amino-acid sequence, 220 residues long: Nicotinamidase (220 aa).

Residue D11 is part of the active site. The Zn(2+) site is built by D53, H55, and H94. K119 is an active-site residue. The active-site Nucleophile is C163.

Belongs to the isochorismatase family.

It is found in the cytoplasm. The protein localises to the nucleus. It localises to the peroxisome. The enzyme catalyses nicotinamide + H2O = nicotinate + NH4(+). The protein operates within cofactor biosynthesis; nicotinate biosynthesis; nicotinate from nicotinamide: step 1/1. In terms of biological role, catalyzes the deamidation of nicotinamide, an early step in the NAD(+) salvage pathway. The protein is Nicotinamidase (pnc1) of Schizosaccharomyces pombe (strain 972 / ATCC 24843) (Fission yeast).